The sequence spans 216 residues: Major fimbrial subunit (216 aa).

The N-terminal stretch at 1-20 is a signal peptide; that stretch reads MKKTLLGSLILLAFAGNVQA. Residues C41 and C81 are joined by a disulfide bond.

This sequence belongs to the fimbrial protein family.

The protein localises to the fimbrium. Functionally, mediates adherence to oropharyngeal epithelial cells. Helps the airway colonization process. The protein is Major fimbrial subunit (hifA) of Haemophilus influenzae.